A 1044-amino-acid polypeptide reads, in one-letter code: MSKRSADDATGSSCLVAAAAAGQPPIKKVHFEPHLIGPVSTLEEMDIKVLEFQNKKLAQRIEQRMRTEAELRHRIEQLEKRQTQDDAVLNVVNRYWNQLNEDIRVLLQRFDAETADELENRNENEVTTSFLAQLSTWDKEELDEKLANRVQVSKRAVAKIVQVIDRLMQRNEKITHVLKGDSLASAGSGSGAGAGGEEEQQQASGDAETTTSSAGVHALEETLKQTHIEIMSENHKLQNLNTSLHEKFHTMSLKMKEYQDAHTAKETENAELKNQIDELQYDLEKIHCRNDKLENHLAEAIEKLKAYHQIYGDPNKSTNSAKTPTTTGSGGATTSVNSQLLEELQKELEEYRELANNRLQELDKLHATHRETLKEVEKLKMDIRQLPESVIVETTEYKCLQSQFSVLYNESMQIKTMLDETRNQLQTSKNQHLRQIEVMESEELIAQKKVRSEMIQMEDVLALIRKEYETLRIEFEQNMAANEQTAPINREMRHLITSLQNHNGQLKGEVQRYKRKYKDTSTDNLKLRQELADALATLEGNKLQAATGAAGEEIKQENSTGVKEENSNNVSASGQTNQTNSGNDTNVAIKEENHISAEDEADDEASGKDVKDGIKQEKLSSGDAAAAEKKDSPGPGNSTSSATNSVPVKNEKDSKDGVKGKDVKAVESETVRDLKAQLKKALNDQKEMKLLLDMYKGVSKDQRDKVQLMATEKKLRSEIEELRQQLKKLQESKREERKKLADEEALRKIKQLEEQKYELQKQMANHKPTDNSWGSGAPGTANYTRPFVGSHEEEALLNEMEVTGQAFEDMQEQNSRLIQQLREKDDANFKLMSERIKANQLHKLLREEKTVLEDQMATATTQIEAMHIVLRKLEEKERSLQATVASIEKELMLRQQAMEMHKRKAIESAQSAADLKLHLEKYHAQMKEAQQVVAEKTSSLEAEAYKTKRLQEELAQFKRKAERMKKMEMSGTTIDEVMIEEIREYKETLTCPSCKVKRKDAVLSKCFHVFCYDCLRTRYETRQRKCPKCNCAFGANDYHRLYLQ.

Residues 43–81 (EEMDIKVLEFQNKKLAQRIEQRMRTEAELRHRIEQLEKR) are a coiled coil. The interval 182-214 (SLASAGSGSGAGAGGEEEQQQASGDAETTTSSA) is disordered. Coiled coils occupy residues 218–386 (ALEE…IRQL) and 417–546 (MLDE…LQAA). Threonine 242 carries the phosphothreonine modification. Serine 243 carries the post-translational modification Phosphoserine. Disordered stretches follow at residues 312-335 (GDPNKSTNSAKTPTTTGSGGATTS), 546-586 (ATGA…NDTN), and 615-664 (KQEK…KDVK). Over residues 320–335 (SAKTPTTTGSGGATTS) the composition is skewed to low complexity. The span at 552–566 (EEIKQENSTGVKEEN) shows a compositional bias: basic and acidic residues. Polar residues predominate over residues 567–586 (SNNVSASGQTNQTNSGNDTN). Over residues 615 to 632 (KQEKLSSGDAAAAEKKDS) the composition is skewed to basic and acidic residues. Phosphoserine occurs at positions 632 and 638. The span at 635 to 647 (PGNSTSSATNSVP) shows a compositional bias: polar residues. The span at 649–664 (KNEKDSKDGVKGKDVK) shows a compositional bias: basic and acidic residues. 2 coiled-coil regions span residues 664-767 (KAVE…ANHK) and 794-970 (EALL…MEMS). An RING-type zinc finger spans residues 991 to 1030 (CPSCKVKRKDAVLSKCFHVFCYDCLRTRYETRQRKCPKCN).

Belongs to the BRE1 family.

Its subcellular location is the nucleus. The catalysed reaction is S-ubiquitinyl-[E2 ubiquitin-conjugating enzyme]-L-cysteine + [acceptor protein]-L-lysine = [E2 ubiquitin-conjugating enzyme]-L-cysteine + N(6)-ubiquitinyl-[acceptor protein]-L-lysine.. The protein operates within protein modification; protein ubiquitination. Functionally, E3 ubiquitin-protein ligase that mediates monoubiquitination of 'Lys-117' of histone H2B. H2B 'Lys-117' ubiquitination gives a specific tag for epigenetic transcriptional activation and is also prerequisite for histone H3 'Lys-4' and 'Lys-79' methylation. It thereby plays a central role in histone code and gene regulation. Required for the expression of Notch target genes in development by affecting the levels of Su(H) in imaginal disk cells and stimulating the Su(H)-mediated transcription of Notch-specific genes. This Drosophila melanogaster (Fruit fly) protein is E3 ubiquitin-protein ligase Bre1 (Bre1).